The following is a 209-amino-acid chain: Guanylate kinase (209 aa).

In terms of domain architecture, Guanylate kinase-like spans 7-185 (GNLYIVAAPS…AAMELQSIVI (179 aa)). Residue 14–21 (APSGGGKT) coordinates ATP.

This sequence belongs to the guanylate kinase family.

It localises to the cytoplasm. The catalysed reaction is GMP + ATP = GDP + ADP. Its function is as follows. Essential for recycling GMP and indirectly, cGMP. This Legionella pneumophila (strain Lens) protein is Guanylate kinase.